A 624-amino-acid chain; its full sequence is MKGQETRGFQSEVKQLLHLMIHSLYSNKEIFLRELISNASDAADKLRFRALSNPDLYEGDGELRVRVSFDKDKRTLTISDNGVGMTRDEVIDHLGTIAKSGTKSFLESLGSDQAKDSQLIGQFGVGFYSAFIVADKVTVRTRAAGEKPENGVFWESAGEGEYTVADITKEDRGTEITLHLREGEDEFLDDWRVRSIISKYSDHIALPVEIEKREEKDGETVISWAKINKAQALWTRNKSEITDEEYKEFYKHIAHDFNDPLTWSHNRVEGKQEYTSLLYIPSQAPWDMWNRDHKHGLKLYVQRVFIMDDAEQFMPNYLRFVRGLIDSSDLPLNVSREILQDSTVTRNLRNALTKRVLQMLEKLAKDDAEKYQTFWQQFGLVLKEGPAEDFANQEAIAKLLRFASTYTDSSAQTVSLEDYVSRMKEGQEKIYYITADSYAAAKSSPHLELLRKKGIEVLLLSDRIDEWMMNYLTEFDGKPFQSVSKVDESLEKLADEVDESAKEAEKALTPFIDRVKALLGERVKDVRLTHRLTDTPAIVSTDADEMSTQMAKLFAAAGQKVPEVKYIFELNPDHVLVKRAADTEDEAKFSEWVELLLDQALLAERGTLEDPNLFIRRMNQLLVS.

An a; substrate-binding region spans residues 1-336 (MKGQETRGFQ…SSDLPLNVSR (336 aa)). The tract at residues 337-552 (EILQDSTVTR…ADEMSTQMAK (216 aa)) is b. Positions 553–624 (LFAAAGQKVP…IRRMNQLLVS (72 aa)) are c.

It belongs to the heat shock protein 90 family. As to quaternary structure, homodimer.

Its subcellular location is the cytoplasm. Functionally, molecular chaperone. Has ATPase activity. The chain is Chaperone protein HtpG from Shigella flexneri.